The following is a 296-amino-acid chain: Protein csh3 (296 aa).

The interval 46–138 (ASPVTAPAAQ…PPSYPGPNTA (93 aa)) is disordered. The span at 93 to 103 (GEKRTPEEPRK) shows a compositional bias: basic and acidic residues. Residues 111-124 (QKQSEASSVNSSTE) show a composition bias toward polar residues. The SH3 domain maps to 140–199 (KNVERVLAMYDFPGPDAGDLGFHAGEVIIVLEHVNNDWWRGELNGKEGIFPSNYVRLLED). A disordered region spans residues 202–246 (VKAQPPPPPPQQNYPPAASSSAPPMQYQQTAYPPQQAPYPPVQAY). Residues 205 to 214 (QPPPPPPQQN) are compositionally biased toward pro residues. A compositionally biased stretch (low complexity) spans 215-235 (YPPAASSSAPPMQYQQTAYPP).

The sequence is that of Protein csh3 (csh3) from Schizosaccharomyces pombe (strain 972 / ATCC 24843) (Fission yeast).